Reading from the N-terminus, the 364-residue chain is MSEMGFLRSVAAVLLLAVFSHAAVVTENGLPIQWGKAPSDLSHLPISDTGVQVNPWDYSQRMTMYKMLINATNAYMSSMGPGEQENPLWSLPLQLGWKLKSGRLADPTLDSSSTCGSEASDPVCISPLSWFACVNYYLSVLPFLAAVETGVVSSGGHQVLIQVPAEVAQDYCSSYSDCSTKHPNAMAKWHLFFQSLRQVSQSEDSDFNKKDSILGLMWAAEEESLQTASGACTERQKLYSSPEVSFQQSWLNSAAFVSAAHFHANIERSEKFMAPLPSRVLQEADSPPNIADLSTEENHTLYIFGWMNSVNQLLGGSLVNLWRKAMCSAQAREKGQALLHDLILDPKFPGSSLWSILSEMSTSC.

Residues 1–22 (MSEMGFLRSVAAVLLLAVFSHA) form the signal peptide. Asn-70 carries N-linked (GlcNAc...) asparagine glycosylation.

This sequence belongs to the LEG1 family. Detected in all tissues tested, with the highest levels in serum (at protein level). At mRNA level, only expressed in liver.

The protein localises to the secreted. Functionally, important for early development of liver, exocrine pancreas and intestine, probably through cell cycle regulation. In liver, its function is partially redundant with leg1b function. The protein is Protein leg1a of Danio rerio (Zebrafish).